The primary structure comprises 1032 residues: Unconventional myosin-Ih (1032 aa).

The Myosin motor domain maps to 12–701; that stretch reads GVQDFVLLDA…TLFATEDAFE (690 aa). 105-112 contributes to the ATP binding site; the sequence is GESGAGKT. Ser365 is subject to Phosphoserine. An actin-binding region spans residues 578-600; that stretch reads LSSLLETLISKEPSYIRCIKPND. IQ domains follow at residues 704-726 and 727-756; these read KHQL…EYVK and KRQA…AVRI. The TH1 domain maps to 855–1029; that stretch reads KDGYTESLNQ…NGQLTVVSVR (175 aa).

It belongs to the TRAFAC class myosin-kinesin ATPase superfamily. Myosin family.

Functionally, myosins are actin-based motor molecules with ATPase activity. Unconventional myosins serve in intracellular movements. Their highly divergent tails are presumed to bind to membranous compartments, which would be moved relative to actin filaments. This chain is Unconventional myosin-Ih (MYO1H), found in Homo sapiens (Human).